Here is a 765-residue protein sequence, read N- to C-terminus: FHF complex subunit HOOK interacting protein 2A (765 aa).

Disordered regions lie at residues threonine 193–serine 236 and threonine 532–glycine 561. Polar residues-rich tracts occupy residues glycine 196 to arginine 208 and serine 535 to proline 550.

It belongs to the FHIP family. As to expression, expressed in all tissues tested, highly expressed brain. In terms of tissue distribution, only detected at high levels in testis.

Functionally, required for proper functioning of the nervous system. The protein is FHF complex subunit HOOK interacting protein 2A of Homo sapiens (Human).